A 637-amino-acid chain; its full sequence is Zinc-transporting ATPase (637 aa).

The next 4 membrane-spanning stretches (helical) occupy residues 43–63, 89–109, 258–278, and 286–306; these read GWLL…AFVI, IFAA…ILIF, GVLI…GWSW, and MVFM…PAAL. Residue D337 is the 4-aspartylphosphate intermediate of the active site. 2 residues coordinate Mg(2+): D535 and D539. The helical transmembrane segment at 599–619 threads the bilayer; that stretch reads VICLLICANFLQAMELPFGVI.

This sequence belongs to the cation transport ATPase (P-type) (TC 3.A.3) family. Type IB subfamily.

Its subcellular location is the cell membrane. It carries out the reaction Zn(2+)(out) + ATP(in) + H2O(in) = Zn(2+)(in) + ADP(in) + phosphate(in) + H(+)(in). Its function is as follows. Couples the hydrolysis of ATP with the transport of zinc into the cell. Plays an important role in protecting cells against oxidative stress. ZosA-mediated zinc transport is required for post-transcriptional control of comK and competence development. The sequence is that of Zinc-transporting ATPase (zosA) from Bacillus subtilis (strain 168).